A 429-amino-acid chain; its full sequence is Tyrosine-protein kinase STYK1 (429 aa).

Residues 30 to 50 (VIIVPALLVGGFLILLAIILW) form a helical membrane-spanning segment. The interval 58 to 83 (SQRQSPGPRGTASVPASRGRSQEAAG) is disordered. The 272-residue stretch at 119–390 (LEVLEQIHSG…GQLLQRLEAA (272 aa)) folds into the Protein kinase domain. Residues 125 to 133 (IHSGSCGTL) and Lys-152 contribute to the ATP site. Asp-256 functions as the Proton acceptor in the catalytic mechanism.

Belongs to the protein kinase superfamily. Tyr protein kinase family. Highly expressed in colon and small intestine. Weakly or not expressed in spleen, skeletal muscle, liver, kidney, heart and brain. Expressed in transformed kidney cell lines (COS-1 and HEK293T).

Its subcellular location is the membrane. The catalysed reaction is L-tyrosyl-[protein] + ATP = O-phospho-L-tyrosyl-[protein] + ADP + H(+). Its function is as follows. Probable tyrosine protein-kinase, which has strong transforming capabilities on a variety of cell lines including NIH 3T3 fibroblasts and on athymic nude mice. When overexpressed, it can also induce tumor cell invasion as well as metastasis in distant organs. May act by activating both MAP kinase and phosphatidylinositol 3'-kinases (PI3K) pathways. The chain is Tyrosine-protein kinase STYK1 (Styk1) from Mus musculus (Mouse).